Reading from the N-terminus, the 120-residue chain is Ragulator complex protein LAMTOR4 homolog (120 aa).

The segment at 93 to 120 (QNGVTTTTSSSSSNSVYNDASDSGAVLA) is disordered. A compositionally biased stretch (low complexity) spans 97–107 (TTTTSSSSSNS).

It belongs to the LAMTOR4 family. As to quaternary structure, part of the Ragulator complex composed of Lamtor3, Lamtor2, CG14184, CG14812, and Lamtor4.

Its subcellular location is the lysosome. Functionally, regulator of the TOR pathway, a signaling cascade that promotes cell growth in response to growth factors, energy levels, and amino acids. As part of the Ragulator complex, may activate the TOR signaling cascade in response to amino acids. This is Ragulator complex protein LAMTOR4 homolog from Drosophila melanogaster (Fruit fly).